The sequence spans 318 residues: Olfactory receptor 10H1 (318 aa).

The Extracellular portion of the chain corresponds to M1 to L25. The N-linked (GlcNAc...) asparagine glycan is linked to N5. A helical transmembrane segment spans residues M26 to M46. Residues A47–S54 are Cytoplasmic-facing. A helical membrane pass occupies residues L55 to V75. Residues A76–S99 are Extracellular-facing. The cysteines at positions 97 and 189 are disulfide-linked. A helical transmembrane segment spans residues Q100–Y120. The Cytoplasmic segment spans residues D121–R139. The helical transmembrane segment at G140–T160 threads the bilayer. Residues S161 to A197 lie on the Extracellular side of the membrane. Residues K198–S218 form a helical membrane-spanning segment. At Y219–A238 the chain is on the cytoplasmic side. The chain crosses the membrane as a helical span at residues F239–I259. The Extracellular segment spans residues Y260–D272. The helical transmembrane segment at T273–L293 threads the bilayer. Residues R294 to M318 lie on the Cytoplasmic side of the membrane.

This sequence belongs to the G-protein coupled receptor 1 family.

It localises to the cell membrane. In terms of biological role, odorant receptor. This is Olfactory receptor 10H1 (OR10H1) from Homo sapiens (Human).